Consider the following 179-residue polypeptide: MAKLHDYYRDQVVNELKTKFNYSSVMQVPRIEKITLNMGVGEALTDKKLLDNAVADLTAISGQKPLITKARKSVAGFKIRQGYPIGCKVTLRGERMWEFFERLITIAVPRIRDFRGLSAKSFDGRGNYSMGVREQIIFPEIDYDKVDRVRGLDITITTTAKSDEEGQALLAVFNFPFRK.

The protein belongs to the universal ribosomal protein uL5 family. Part of the 50S ribosomal subunit; part of the 5S rRNA/L5/L18/L25 subcomplex. Contacts the 5S rRNA and the P site tRNA. Forms a bridge to the 30S subunit in the 70S ribosome.

This is one of the proteins that bind and probably mediate the attachment of the 5S RNA into the large ribosomal subunit, where it forms part of the central protuberance. In the 70S ribosome it contacts protein S13 of the 30S subunit (bridge B1b), connecting the 2 subunits; this bridge is implicated in subunit movement. Contacts the P site tRNA; the 5S rRNA and some of its associated proteins might help stabilize positioning of ribosome-bound tRNAs. This Haemophilus ducreyi (strain 35000HP / ATCC 700724) protein is Large ribosomal subunit protein uL5.